A 90-amino-acid polypeptide reads, in one-letter code: Molybdopterin synthase sulfur carrier subunit (90 aa).

Gly-90 carries the post-translational modification 1-thioglycine; alternate. Gly-90 is modified (glycyl adenylate; alternate).

The protein belongs to the MoaD family. MOCS2A subfamily. In terms of assembly, heterotetramer; composed of 2 small (Mocs2A) and 2 large (Mocs2B) subunits. C-terminal thiocarboxylation occurs in 2 steps, it is first acyl-adenylated (-COAMP) via the hesA/moeB/thiF part of MOCS3, then thiocarboxylated (-COSH) via the rhodanese domain of MOCS3.

The protein localises to the cytoplasm. Its pathway is cofactor biosynthesis; molybdopterin biosynthesis. Its function is as follows. Acts as a sulfur carrier required for molybdopterin biosynthesis. Component of the molybdopterin synthase complex that catalyzes the conversion of precursor Z into molybdopterin by mediating the incorporation of 2 sulfur atoms into precursor Z to generate a dithiolene group. In the complex, serves as sulfur donor by being thiocarboxylated (-COSH) at its C-terminus by MOCS3. After interaction with Mocs2B, the sulfur is then transferred to precursor Z to form molybdopterin. The sequence is that of Molybdopterin synthase sulfur carrier subunit from Drosophila ananassae (Fruit fly).